The sequence spans 191 residues: Crossover junction endodeoxyribonuclease RuvC (191 aa).

Residues Asp-7, Glu-67, and Asp-141 contribute to the active site. Residues Asp-7, Glu-67, and Asp-141 each coordinate Mg(2+).

The protein belongs to the RuvC family. As to quaternary structure, homodimer which binds Holliday junction (HJ) DNA. The HJ becomes 2-fold symmetrical on binding to RuvC with unstacked arms; it has a different conformation from HJ DNA in complex with RuvA. In the full resolvosome a probable DNA-RuvA(4)-RuvB(12)-RuvC(2) complex forms which resolves the HJ. Mg(2+) is required as a cofactor.

The protein resides in the cytoplasm. The enzyme catalyses Endonucleolytic cleavage at a junction such as a reciprocal single-stranded crossover between two homologous DNA duplexes (Holliday junction).. In terms of biological role, the RuvA-RuvB-RuvC complex processes Holliday junction (HJ) DNA during genetic recombination and DNA repair. Endonuclease that resolves HJ intermediates. Cleaves cruciform DNA by making single-stranded nicks across the HJ at symmetrical positions within the homologous arms, yielding a 5'-phosphate and a 3'-hydroxyl group; requires a central core of homology in the junction. The consensus cleavage sequence is 5'-(A/T)TT(C/G)-3'. Cleavage occurs on the 3'-side of the TT dinucleotide at the point of strand exchange. HJ branch migration catalyzed by RuvA-RuvB allows RuvC to scan DNA until it finds its consensus sequence, where it cleaves and resolves the cruciform DNA. In Myxococcus xanthus (strain DK1622), this protein is Crossover junction endodeoxyribonuclease RuvC.